An 89-amino-acid chain; its full sequence is Large ribosomal subunit protein eL34 (89 aa).

Residues Met1–Val32 are disordered.

Belongs to the eukaryotic ribosomal protein eL34 family.

The polypeptide is Large ribosomal subunit protein eL34 (Methanococcus aeolicus (strain ATCC BAA-1280 / DSM 17508 / OCM 812 / Nankai-3)).